A 128-amino-acid polypeptide reads, in one-letter code: Small ribosomal subunit protein uS9 (128 aa).

The tract at residues 105–128 (DPRSVERKKPGQPKARRRFQFSKR) is disordered. Basic residues predominate over residues 114 to 128 (PGQPKARRRFQFSKR).

Belongs to the universal ribosomal protein uS9 family.

The protein is Small ribosomal subunit protein uS9 of Bacteroides thetaiotaomicron (strain ATCC 29148 / DSM 2079 / JCM 5827 / CCUG 10774 / NCTC 10582 / VPI-5482 / E50).